The following is a 337-amino-acid chain: Ketol-acid reductoisomerase (NADP(+)) (337 aa).

The KARI N-terminal Rossmann domain maps to 1–180 (MQVYYDKDAD…GGTKGGVIET (180 aa)). Residues 24 to 27 (YGSQ), Arg47, and Ser51 each bind NADP(+). His106 is an active-site residue. Residue Gly132 coordinates NADP(+). The KARI C-terminal knotted domain maps to 181-326 (TFREETETDL…AQLRAMMPWI (146 aa)). Residues Asp189, Glu193, Glu225, and Glu229 each contribute to the Mg(2+) site. Ser250 contributes to the substrate binding site.

Belongs to the ketol-acid reductoisomerase family. It depends on Mg(2+) as a cofactor.

The enzyme catalyses (2R)-2,3-dihydroxy-3-methylbutanoate + NADP(+) = (2S)-2-acetolactate + NADPH + H(+). It catalyses the reaction (2R,3R)-2,3-dihydroxy-3-methylpentanoate + NADP(+) = (S)-2-ethyl-2-hydroxy-3-oxobutanoate + NADPH + H(+). It participates in amino-acid biosynthesis; L-isoleucine biosynthesis; L-isoleucine from 2-oxobutanoate: step 2/4. Its pathway is amino-acid biosynthesis; L-valine biosynthesis; L-valine from pyruvate: step 2/4. Functionally, involved in the biosynthesis of branched-chain amino acids (BCAA). Catalyzes an alkyl-migration followed by a ketol-acid reduction of (S)-2-acetolactate (S2AL) to yield (R)-2,3-dihydroxy-isovalerate. In the isomerase reaction, S2AL is rearranged via a Mg-dependent methyl migration to produce 3-hydroxy-3-methyl-2-ketobutyrate (HMKB). In the reductase reaction, this 2-ketoacid undergoes a metal-dependent reduction by NADPH to yield (R)-2,3-dihydroxy-isovalerate. This is Ketol-acid reductoisomerase (NADP(+)) from Neisseria meningitidis serogroup C (strain 053442).